The following is a 215-amino-acid chain: Riboflavin synthase (215 aa).

Lumazine-binding repeat units lie at residues 1-96 and 97-193; these read MFTG…FGGH and FVSG…YRFL. 2,4-dihydroxypteridine-binding positions include 4–6, 47–49, 61–66, 100–102, Lys135, 144–146, and 158–163; these read GII, CLT, DVMPET, GHV, SLT, and SLIPHT.

Homotrimer. Can interact with 6,7-dimethyl-8-ribityllumazine synthase, forming a lumazine synthase/riboflavin synthase complex, also designated as 'heavy riboflavin synthase complex', which consists of a trimer of riboflavin synthase enclosed within an icosahedral structure composed of 60 subunits of 6,7-dimethyl-8-ribityllumazine synthase.

The enzyme catalyses 2 6,7-dimethyl-8-(1-D-ribityl)lumazine + H(+) = 5-amino-6-(D-ribitylamino)uracil + riboflavin. The protein operates within cofactor biosynthesis; riboflavin biosynthesis; riboflavin from 2-hydroxy-3-oxobutyl phosphate and 5-amino-6-(D-ribitylamino)uracil: step 2/2. With respect to regulation, is activated by sulfite ions. Its function is as follows. Catalyzes the dismutation of two molecules of 6,7-dimethyl-8-ribityllumazine, resulting in the formation of riboflavin and 5-amino-6-(D-ribitylamino)uracil. In Bacillus subtilis (strain 168), this protein is Riboflavin synthase (ribE).